Consider the following 394-residue polypeptide: NADH dehydrogenase [ubiquinone] iron-sulfur protein 2 (394 aa).

Belongs to the complex I 49 kDa subunit family. As to quaternary structure, complex I is composed of at least 49 different subunits. This is a component of the iron-sulfur (IP) fragment of the enzyme.

The protein resides in the mitochondrion. The catalysed reaction is a ubiquinone + NADH + 5 H(+)(in) = a ubiquinol + NAD(+) + 4 H(+)(out). Core subunit of the mitochondrial membrane respiratory chain NADH dehydrogenase (Complex I) that is believed to belong to the minimal assembly required for catalysis. Complex I functions in the transfer of electrons from NADH to the respiratory chain. The immediate electron acceptor for the enzyme is believed to be ubiquinone. Component of the iron-sulfur (IP) fragment of the enzyme. In Arabidopsis thaliana (Mouse-ear cress), this protein is NADH dehydrogenase [ubiquinone] iron-sulfur protein 2 (NAD7).